The following is a 747-amino-acid chain: MSMAVDMSSKQPTKDFFSSPALSLSLAGIFRNASSGSTNPEEDFLGRRVVDDEDRTVEMSSENSGPTRSRSEEDLEGEDHDDEEEEEEDGAAGNKGTNKRKRKKYHRHTTDQIRHMEALFKETPHPDEKQRQQLSKQLGLAPRQVKFWFQNRRTQIKAIQERHENSLLKAELEKLREENKAMRESFSKANSSCPNCGGGPDDLHLENSKLKAELDKLRAALGRTPYPLQASCSDDQEHRLGSLDFYTGVFALEKSRIAEISNRATLELQKMATSGEPMWLRSVETGREILNYDEYLKEFPQAQASSFPGRKTIEASRDAGIVFMDAHKLAQSFMDVGQWKETFACLISKAATVDVIRQGEGPSRIDGAIQLMFGEMQLLTPVVPTREVYFVRSCRQLSPEKWAIVDVSVSVEDSNTEKEASLLKCRKLPSGCIIEDTSNGHSKVTWVEHLDVSASTVQPLFRSLVNTGLAFGARHWVATLQLHCERLVFFMATNVPTKDSLGVTTLAGRKSVLKMAQRMTQSFYRAIAASSYHQWTKITTKTGQDMRVSSRKNLHDPGEPTGVIVCASSSLWLPVSPALLFDFFRDEARRHEWDALSNGAHVQSIANLSKGQDRGNSVAIQTVKSREKSIWVLQDSSTNSYESVVVYAPVDINTTQLVLAGHDPSNIQILPSGFSIIPDGVESRPLVITSTQDDRNSQGGSLLTLALQTLINPSPAAKLNMESVESVTNLVSVTLHNIKRSLQIEDC.

Positions 31 to 112 are disordered; that stretch reads RNASSGSTNP…KKYHRHTTDQ (82 aa). Residues 58-68 show a composition bias toward polar residues; the sequence is EMSSENSGPTR. Residues 73–90 are compositionally biased toward acidic residues; it reads EDLEGEDHDDEEEEEEDG. The segment covering 97–107 has biased composition (basic residues); that stretch reads TNKRKRKKYHR. The segment at residues 101 to 160 is a DNA-binding region (homeobox); it reads KRKKYHRHTTDQIRHMEALFKETPHPDEKQRQQLSKQLGLAPRQVKFWFQNRRTQIKAIQ. A coiled-coil region spans residues 155-223; that stretch reads QIKAIQERHE…LDKLRAALGR (69 aa). Residues 250 to 489 form the START domain; the sequence is FALEKSRIAE…LQLHCERLVF (240 aa).

Belongs to the HD-ZIP homeobox family. Class IV subfamily. As to quaternary structure, interacts with GIR1 and GIR2. In terms of tissue distribution, expressed in individual developing trichome cells of the emerging leaf primordia. Expressed in differentiating hairless cells of root epidermis.

It is found in the nucleus. Its function is as follows. Transcription factor involved in the determination of epidermal cell identity. Required for correct morphological development and maturation of trichomes. Regulates the frequency of trichome initiation and determines trichome spacing. Acts as a negative factor for root hair development. Required for ectopic repression of root hair development in a subset of epidermal cells. May suppress hair formation in root epidermis by promoting differentiation into hairless epidermal cells. Directly suppresses the bHLH transcription factor genes, RHD6, RSL1, RSL2, LRL1, and LRL2, which have diverse functions in root hair development. Required for normal development of seed coat mucilage. Involved in the control of seed oil accumulation. Acts as a negative regulator of anthocyanin biosynthesis. May directly repress the expression of some component genes from the MYB-bHLH-WD40 (MBW) transcriptional activator complex. The MBW complex activates the transcription of late biosynthesis genes in the flavonoid pathway, leading to the production of anthocyanins. This Arabidopsis thaliana (Mouse-ear cress) protein is Homeobox-leucine zipper protein GLABRA 2.